A 147-amino-acid polypeptide reads, in one-letter code: SsrA-binding protein (147 aa).

Residues 124-147 form a disordered region; sequence KKHDKRQDIKDRDWARKQARQDFS. A compositionally biased stretch (basic and acidic residues) spans 128-147; the sequence is KRQDIKDRDWARKQARQDFS.

Belongs to the SmpB family.

The protein localises to the cytoplasm. Required for rescue of stalled ribosomes mediated by trans-translation. Binds to transfer-messenger RNA (tmRNA), required for stable association of tmRNA with ribosomes. tmRNA and SmpB together mimic tRNA shape, replacing the anticodon stem-loop with SmpB. tmRNA is encoded by the ssrA gene; the 2 termini fold to resemble tRNA(Ala) and it encodes a 'tag peptide', a short internal open reading frame. During trans-translation Ala-aminoacylated tmRNA acts like a tRNA, entering the A-site of stalled ribosomes, displacing the stalled mRNA. The ribosome then switches to translate the ORF on the tmRNA; the nascent peptide is terminated with the 'tag peptide' encoded by the tmRNA and targeted for degradation. The ribosome is freed to recommence translation, which seems to be the essential function of trans-translation. The chain is SsrA-binding protein from Neorickettsia sennetsu (strain ATCC VR-367 / Miyayama) (Ehrlichia sennetsu).